A 218-amino-acid chain; its full sequence is PKHD-type hydroxylase Sala_1910 (218 aa).

The 99-residue stretch at 74 to 172 (RIAPPLLTRY…RLVAITFIQS (99 aa)) folds into the Fe2OG dioxygenase domain. Fe cation is bound by residues His92, Asp94, and His153. Arg163 lines the 2-oxoglutarate pocket.

The cofactor is Fe(2+). L-ascorbate is required as a cofactor.

The protein is PKHD-type hydroxylase Sala_1910 of Sphingopyxis alaskensis (strain DSM 13593 / LMG 18877 / RB2256) (Sphingomonas alaskensis).